A 138-amino-acid polypeptide reads, in one-letter code: Histone H2AX (138 aa).

The disordered stretch occupies residues 1-23 (MSTTGKGGKAKGKTASSKQVSRS). Residue Ser-2 is modified to N-acetylserine. N6-acetyllysine occurs at positions 6, 9, 11, 13, and 18. Ser-123 carries the phosphoserine modification. Lys-124 participates in a covalent cross-link: Glycyl lysine isopeptide (Lys-Gly) (interchain with G-Cter in ubiquitin). A phosphoserine mark is found at Ser-125, Ser-130, and Ser-135. Positions 135 to 136 (SQ) match the [ST]-Q motif motif.

This sequence belongs to the histone H2A family. In terms of assembly, the nucleosome is a histone octamer containing two molecules each of H2A, H2B, H3 and H4 assembled in one H3-H4 heterotetramer and two H2A-H2B heterodimers. The octamer wraps approximately 147 bp of DNA. Post-translationally, monoubiquitination of Lys-124 gives a specific tag for epigenetic transcriptional repression. Phosphorylated to form H2AX134ph (gamma-H2AX) in response to DNA double-strand breaks (DSBs) generated by exogenous genotoxic agents in both the mitotic MIC and the amitotic MAC. Gamma-H2AX is also found when programmed DNA rearrangements occur, namely homologous recombination in the MIC during prophase of meiosis, and chromosome fragmentation and DNA elimination in developing MACs. Gamma-H2AX is important to recover from exogenous DNA damage and to repair breaks associated with normal micronuclear meiosis and mitosis and macronuclear amitotic division. In terms of processing, acetylation occurs almost exclusively in the MAC.

The protein localises to the nucleus. The protein resides in the chromosome. Its function is as follows. Core component of nucleosome which plays a central role in DNA double strand break (DSB) repair. Nucleosomes wrap and compact DNA into chromatin, limiting DNA accessibility to the cellular machineries which require DNA as a template. Histones thereby play a central role in transcription regulation, DNA repair, DNA replication and chromosomal stability. DNA accessibility is regulated via a complex set of post-translational modifications of histones, also called histone code, and nucleosome remodeling. In Tetrahymena thermophila (strain SB210), this protein is Histone H2AX (HTA1).